Reading from the N-terminus, the 65-residue chain is Trypsin inhibitor (65 aa).

As to quaternary structure, homotrimer.

The sequence is that of Trypsin inhibitor from Zea mays (Maize).